The following is a 164-amino-acid chain: Transcriptional repressor NrdR (164 aa).

A zinc finger lies at 3 to 34 (CPKCNYHKSSVVDSRQAEDGNTIRRRRECEQC). In terms of domain architecture, ATP-cone spans 49-139 (LLVIKKDGTR…VYKSFKDVDE (91 aa)).

It belongs to the NrdR family. Zn(2+) serves as cofactor.

Negatively regulates transcription of bacterial ribonucleotide reductase nrd genes and operons by binding to NrdR-boxes. In Streptococcus pyogenes serotype M5 (strain Manfredo), this protein is Transcriptional repressor NrdR.